The following is a 272-amino-acid chain: Shikimate dehydrogenase (NADP(+)) (272 aa).

Shikimate is bound by residues 14 to 16 (SKS) and Thr-61. Lys-65 acts as the Proton acceptor in catalysis. Glu-77 contacts NADP(+). Residues Asn-86 and Asp-102 each coordinate shikimate. NADP(+) is bound by residues 126–130 (GAGGA), 149–154 (NRTVSR), and Met-213. Tyr-215 provides a ligand contact to shikimate. Residue Gly-237 participates in NADP(+) binding.

This sequence belongs to the shikimate dehydrogenase family. Homodimer.

The enzyme catalyses shikimate + NADP(+) = 3-dehydroshikimate + NADPH + H(+). It functions in the pathway metabolic intermediate biosynthesis; chorismate biosynthesis; chorismate from D-erythrose 4-phosphate and phosphoenolpyruvate: step 4/7. Involved in the biosynthesis of the chorismate, which leads to the biosynthesis of aromatic amino acids. Catalyzes the reversible NADPH linked reduction of 3-dehydroshikimate (DHSA) to yield shikimate (SA). This chain is Shikimate dehydrogenase (NADP(+)), found in Escherichia coli O6:H1 (strain CFT073 / ATCC 700928 / UPEC).